Here is a 200-residue protein sequence, read N- to C-terminus: Charged multivesicular body protein 6 (200 aa).

The N-myristoyl glycine moiety is linked to residue Gly-2. The stretch at 10-145 (QSRVTEQDRA…YQRQIDELLA (136 aa)) forms a coiled coil. Ser-119 bears the Phosphoserine mark. Phosphothreonine is present on Thr-130. A Type-2 MIT-interacting motif motif is present at residues 168–179 (MELPEVPSEPLP). The disordered stretch occupies residues 168-200 (MELPEVPSEPLPDRNPEAPAKARSRQAELVAAS).

It belongs to the SNF7 family. Probable core component of the endosomal sorting required for transport complex III (ESCRT-III). ESCRT-III components are thought to multimerize to form a flat lattice on the perimeter membrane of the endosome. Several assembly forms of ESCRT-III may exist that interact and act sequentially. Interacts with VPS4A; the interaction is direct. Interacts with VPS4B; the interaction is direct. Interacts with CHMP4A, CHMP4B and CHMP4C. Interacts with SNF8, VPS25 and VPS36. ISGylated in a CHMP5-dependent manner. Isgylation weakens its interaction with VPS4A.

The protein resides in the endomembrane system. The protein localises to the endosome membrane. It is found in the late endosome membrane. Its subcellular location is the membrane. Its function is as follows. Probable core component of the endosomal sorting required for transport complex III (ESCRT-III) which is involved in multivesicular bodies (MVBs) formation and sorting of endosomal cargo proteins into MVBs. MVBs contain intraluminal vesicles (ILVs) that are generated by invagination and scission from the limiting membrane of the endosome and mostly are delivered to lysosomes enabling degradation of membrane proteins, such as stimulated growth factor receptors, lysosomal enzymes and lipids. The MVB pathway appears to require the sequential function of ESCRT-O, -I,-II and -III complexes. ESCRT-III proteins mostly dissociate from the invaginating membrane before the ILV is released. The ESCRT machinery also functions in topologically equivalent membrane fission events, such as the terminal stages of cytokinesis. ESCRT-III proteins are believed to mediate the necessary vesicle extrusion and/or membrane fission activities, possibly in conjunction with the AAA ATPase VPS4. In the ESCRT-III complex, it probably serves as an acceptor for the ESCRT-II complex on endosomal membranes. This chain is Charged multivesicular body protein 6 (Chmp6), found in Mus musculus (Mouse).